An 85-amino-acid polypeptide reads, in one-letter code: Protein 19.2 (85 aa).

This is Protein 19.2 from Escherichia coli (Bacteriophage T7).